The sequence spans 313 residues: C-type lectin domain-containing protein 162 (313 aa).

The signal sequence occupies residues 1–17; that stretch reads MNIFTLLFIYFLSDTVA. N-linked (GlcNAc...) asparagine glycans are attached at residues asparagine 28 and asparagine 41. A C-type lectin domain is found at 28–145; that stretch reads NATGCFQFFR…DAMFLPFVCE (118 aa). Residues cysteine 49 and cysteine 144 are joined by a disulfide bond. N-linked (GlcNAc...) asparagine glycosylation occurs at asparagine 213. A disordered region spans residues 244 to 313; that stretch reads VSQTETEMSR…RSKTIQISRG (70 aa). The segment covering 250 to 259 has biased composition (basic and acidic residues); the sequence is EMSRSRKEKE. Residues asparagine 279 and asparagine 300 are each glycosylated (N-linked (GlcNAc...) asparagine). Over residues 291–304 the composition is skewed to basic and acidic residues; the sequence is SKEKREREENETIR.

Its subcellular location is the secreted. The protein is C-type lectin domain-containing protein 162 (clec-162) of Caenorhabditis elegans.